The chain runs to 148 residues: Large ribosomal subunit protein bL9 (148 aa).

Belongs to the bacterial ribosomal protein bL9 family.

Functionally, binds to the 23S rRNA. This is Large ribosomal subunit protein bL9 from Pseudomonas fluorescens (strain Pf0-1).